A 664-amino-acid chain; its full sequence is Cyclic nucleotide-gated channel alpha-2 (664 aa).

Residues 1 to 11 are compositionally biased toward polar residues; sequence MTEKTNGVKSS. Residues 1–49 form a disordered region; sequence MTEKTNGVKSSPANNHNHHAPPAIKANGKDDHRTSSRPHSAADDDTSSE. At 1–144 the chain is on the cytoplasmic side; the sequence is MTEKTNGVKS…PAGDWYYCWL (144 aa). Over residues 12 to 23 the composition is skewed to low complexity; the sequence is PANNHNHHAPPA. A helical transmembrane segment spans residues 145-166; the sequence is FVIAMPVLYNWCLLVARACFSD. The Extracellular portion of the chain corresponds to 167–176; sequence LQKGYYLVWL. Residues 177–197 form a helical membrane-spanning segment; the sequence is VLDYVSDVVYIADLFIRLRTG. The Cytoplasmic portion of the chain corresponds to 198–222; sequence FLEQGLLVKDTKKLRDNYIHTLQFK. The chain crosses the membrane as a helical span at residues 223 to 241; it reads LDVASIIPTDLIYFAVDIH. The Extracellular segment spans residues 242-246; the sequence is SPEVR. A helical membrane pass occupies residues 247–265; that stretch reads FNRLLHFARMFEFFDRTET. Residues 266-272 lie on the Cytoplasmic side of the membrane; the sequence is RTNYPNI. The interval 270–378 is ion conduction pathway; the sequence is PNIFRISNLV…GNVGSMISNM (109 aa). The chain crosses the membrane as a helical span at residues 273-296; that stretch reads FRISNLVLYILVIIHWNACIYYAI. The Extracellular portion of the chain corresponds to 297–319; that stretch reads SKSIGFGVDTWVYPNITDPEYGY. The next 2 helical transmembrane spans lie at 320–354 and 355–379; these read LAREYIYCLYWSTLTLTTIGETPPPVKDEEYLFVI and FDFLIGVLIFATIVGNVGSMISNMN. The selectivity filter stretch occupies residues 337–340; the sequence is TIGE. A C-linker region spans residues 380–456; it reads ATRAEFQAKI…STLKKVRIFH (77 aa). Residues 380–664 lie on the Cytoplasmic side of the membrane; that stretch reads ATRAEFQAKI…SPELAAADEP (285 aa). A cyclic nucleotide-binding domain region spans residues 460-580; sequence AGLLVELVLK…EERGREILMK (121 aa). 3',5'-cyclic GMP-binding residues include Gly520, Ser523, Arg536, and Thr537. The 3',5'-cyclic AMP site is built by Arg536 and Thr537. The stretch at 597–651 forms a coiled coil; it reads VQEKLGQLETNMETLYTRFGRLLAEYTGAQQKLKQRITVLETKMKQNNEDDYLSD. Positions 641–664 are disordered; that stretch reads KQNNEDDYLSDGMNSPELAAADEP.

It belongs to the cyclic nucleotide-gated cation channel (TC 1.A.1.5) family. CNGA2 subfamily. In terms of assembly, the olfactory cyclic nucleotide-gated channel is an heterotetramer composed of CNGA2, CNGA4 and CNGB1b subunits with 2:1:1 stoichiometry.

The protein localises to the cell projection. It is found in the cilium membrane. It catalyses the reaction Ca(2+)(in) = Ca(2+)(out). It carries out the reaction Na(+)(in) = Na(+)(out). The enzyme catalyses K(+)(in) = K(+)(out). The catalysed reaction is NH4(+)(in) = NH4(+)(out). It catalyses the reaction Rb(+)(in) = Rb(+)(out). It carries out the reaction Li(+)(in) = Li(+)(out). The enzyme catalyses Cs(+)(in) = Cs(+)(out). Pore-forming subunit of the olfactory cyclic nucleotide-gated channel. Operates in the cilia of olfactory sensory neurons where chemical stimulation of the odorant is converted to an electrical signal. Mediates odorant-induced cAMP-dependent Ca(2+) influx triggering neuron depolarization. The rise of intracellular Ca(2+) levels potentiates the olfactory response by activating Ca(2+)-dependent Cl(-) channels, but it also serves as a negative feedback signal to desensitize the channel for rapid adaptation to odorants. Conducts cAMP- and cGMP-gated ion currents, with permeability for monovalent and divalent cations. This chain is Cyclic nucleotide-gated channel alpha-2, found in Homo sapiens (Human).